The sequence spans 363 residues: UDP-N-acetylglucosamine--N-acetylmuramyl-(pentapeptide) pyrophosphoryl-undecaprenol N-acetylglucosamine transferase (363 aa).

Residues 10 to 12, Asn124, Ser195, Ile250, and Gln295 each bind UDP-N-acetyl-alpha-D-glucosamine; that span reads TGG.

It belongs to the glycosyltransferase 28 family. MurG subfamily.

The protein resides in the cell membrane. It catalyses the reaction di-trans,octa-cis-undecaprenyl diphospho-N-acetyl-alpha-D-muramoyl-L-alanyl-D-glutamyl-meso-2,6-diaminopimeloyl-D-alanyl-D-alanine + UDP-N-acetyl-alpha-D-glucosamine = di-trans,octa-cis-undecaprenyl diphospho-[N-acetyl-alpha-D-glucosaminyl-(1-&gt;4)]-N-acetyl-alpha-D-muramoyl-L-alanyl-D-glutamyl-meso-2,6-diaminopimeloyl-D-alanyl-D-alanine + UDP + H(+). The protein operates within cell wall biogenesis; peptidoglycan biosynthesis. Functionally, cell wall formation. Catalyzes the transfer of a GlcNAc subunit on undecaprenyl-pyrophosphoryl-MurNAc-pentapeptide (lipid intermediate I) to form undecaprenyl-pyrophosphoryl-MurNAc-(pentapeptide)GlcNAc (lipid intermediate II). The chain is UDP-N-acetylglucosamine--N-acetylmuramyl-(pentapeptide) pyrophosphoryl-undecaprenol N-acetylglucosamine transferase from Listeria welshimeri serovar 6b (strain ATCC 35897 / DSM 20650 / CCUG 15529 / CIP 8149 / NCTC 11857 / SLCC 5334 / V8).